Reading from the N-terminus, the 503-residue chain is MSQLKLEEISSVIEEKIKNFELDCDMAEVGKVVSYADGVAKVYGLNGVMSYEVLEFETGDKGVAANLEEDSVGVIVFGFGNNIKEGTSVKRTKSLMKVPVGDAVVGRVLNALGEPIDGKGEIETNEFSLIEQKAPGIMDRKSVHEPLQTGIKAIDALVPIGRGQRELIIGDKQTGKTTVAIDAIINQKGQNVICIYVAIGQKESTVAQVVRKLEEYGAMEYSVVINASASDSAAMQYLAPYSGVAMGEYFRDHARHALIIYDDLSKHAVAYREISLILRRPPGREAFPGDVFYIHSRLLERAAKLCDEKGAGSLTALPIVETQAGDVSAYIPTNIISITDGQIFLETDLFYSGIRPAINVGLSVSRVGGAAQIKATKQVSGTLRLDLAQYRELQAFTQFASDLDEASKKQLERGQRMVEVLKQAPYSPLPIEKQVVIIYAGAKGFLDSVSVKKVVDFEEQLHPFLEAKYPQVLEEIHTKKVLDKDLEAMLRKVLEEFKLTYSE.

Position 170–177 (170–177) interacts with ATP; sequence GDKQTGKT.

This sequence belongs to the ATPase alpha/beta chains family. As to quaternary structure, F-type ATPases have 2 components, CF(1) - the catalytic core - and CF(0) - the membrane proton channel. CF(1) has five subunits: alpha(3), beta(3), gamma(1), delta(1), epsilon(1). CF(0) has three main subunits: a(1), b(2) and c(9-12). The alpha and beta chains form an alternating ring which encloses part of the gamma chain. CF(1) is attached to CF(0) by a central stalk formed by the gamma and epsilon chains, while a peripheral stalk is formed by the delta and b chains.

It localises to the cell inner membrane. It catalyses the reaction ATP + H2O + 4 H(+)(in) = ADP + phosphate + 5 H(+)(out). In terms of biological role, produces ATP from ADP in the presence of a proton gradient across the membrane. The alpha chain is a regulatory subunit. This chain is ATP synthase subunit alpha, found in Helicobacter pylori (strain Shi470).